The primary structure comprises 131 residues: uncharacterized protein (131 aa).

This is an uncharacterized protein from Orgyia pseudotsugata multicapsid polyhedrosis virus (OpMNPV).